The primary structure comprises 952 residues: Probable outer membrane protein pmp16 (952 aa).

Residues 1-27 (MSKTPPKFLFYLGNFTACMFGMTPAVY) form the signal peptide. The Autotransporter domain occupies 646-952 (GDLATTPLWQ…HLQAGSTLKF (307 aa)).

It belongs to the PMP outer membrane protein family.

It localises to the secreted. The protein localises to the cell wall. It is found in the cell outer membrane. This Chlamydia pneumoniae (Chlamydophila pneumoniae) protein is Probable outer membrane protein pmp16 (pmp16).